The following is a 513-amino-acid chain: V-type proton ATPase subunit B, kidney isoform (513 aa).

Position 394 (R394) interacts with ATP. A PDZ-binding motif is present at residues 510–513; it reads DTAL.

Belongs to the ATPase alpha/beta chains family. V-ATPase is a heteromultimeric enzyme made up of two complexes: the ATP-hydrolytic V1 complex and the proton translocation V0 complex. The V1 complex consists of three catalytic AB heterodimers that form a heterohexamer, three peripheral stalks each consisting of EG heterodimers, one central rotor including subunits D and F, and the regulatory subunits C and H. The proton translocation complex V0 consists of the proton transport subunit a, a ring of proteolipid subunits c9c'', rotary subunit d, subunits e and f, and the accessory subunits ATP6AP1/Ac45 and ATP6AP2/PRR. Forms a complex with NHERF1 and SCL4A7. As to expression, kidney; localizes to early distal nephron, encompassing thick ascending limbs and distal convoluted tubules (at protein level). Expressed in the cochlea and endolymphatic sac.

The protein localises to the apical cell membrane. Its subcellular location is the basolateral cell membrane. In terms of biological role, non-catalytic subunit of the V1 complex of vacuolar(H+)-ATPase (V-ATPase), a multisubunit enzyme composed of a peripheral complex (V1) that hydrolyzes ATP and a membrane integral complex (V0) that translocates protons. V-ATPase is responsible for acidifying and maintaining the pH of intracellular compartments and in some cell types, is targeted to the plasma membrane, where it is responsible for acidifying the extracellular environment. Essential for the proper assembly and activity of V-ATPase. In renal intercalated cells, mediates secretion of protons (H+) into the urine thereby ensuring correct urinary acidification. Required for optimal olfactory function by mediating the acidification of the nasal olfactory epithelium. In Homo sapiens (Human), this protein is V-type proton ATPase subunit B, kidney isoform (ATP6V1B1).